Here is a 374-residue protein sequence, read N- to C-terminus: MREFIPPASRFIELPDGFAMRRGGALYGARIAYETFGSLNAARDNAVLVLTGLSPDAHAASRPDDPTPGWWEAMVGPGKPVDTDLWHVICVNSLGSCKGSTGPASTDPRTGEPYRLSFPELSIEDIADAAAHTVRALGISRLACVVGASMGGMSALALLARHPELARTHISLSGAVHALPFSIAVRSLQREAIRSDPGWLQGHYDEGEGPRRGMLTARKLGMMTYRSAQEWDCRFGRTRIGERRRADQGRFGPEFEVESYLDFHAQRFADRFDPNSYLYLSHAMDQFDLGDGGGGGGGAPGALSRMRVERALVMGARTDILFPLSQQQEIADGLSAGGADVSFLPVDTPAGHDAFLVDIERFGPPVAKFLAIVA.

Residues 46-357 (AVLVLTGLSP…TPAGHDAFLV (312 aa)) enclose the AB hydrolase-1 domain. S149 serves as the catalytic Nucleophile. Active-site residues include D319 and H352.

This sequence belongs to the AB hydrolase superfamily. MetX family. In terms of assembly, homodimer.

It localises to the cytoplasm. It catalyses the reaction L-serine + acetyl-CoA = O-acetyl-L-serine + CoA. The enzyme catalyses L-homoserine + acetyl-CoA = O-acetyl-L-homoserine + CoA. It functions in the pathway antibiotic biosynthesis. Functionally, involved in the biosynthesis of the antibiotic D-cycloserine (DCS), a cyclic structural analog of D-alanine, used as an antitubercular agent. Catalyzes the transfer of the acetyl group from acetyl-CoA to the hydroxyl group of L-serine to yield the activated serine, O-acetyl-L-serine. It prefers L-serine over L-homoserine. The polypeptide is L-serine/homoserine O-acetyltransferase (Streptomyces lavendulae).